A 335-amino-acid chain; its full sequence is DNA primase small subunit PriS (335 aa).

Catalysis depends on residues Asp96, Asp98, and Asp243.

It belongs to the eukaryotic-type primase small subunit family. In terms of assembly, heterodimer of a small subunit (PriS) and a large subunit (PriL). Mg(2+) serves as cofactor. Mn(2+) is required as a cofactor.

In terms of biological role, catalytic subunit of DNA primase, an RNA polymerase that catalyzes the synthesis of short RNA molecules used as primers for DNA polymerase during DNA replication. The small subunit contains the primase catalytic core and has DNA synthesis activity on its own. Binding to the large subunit stabilizes and modulates the activity, increasing the rate of DNA synthesis while decreasing the length of the DNA fragments, and conferring RNA synthesis capability. The DNA polymerase activity may enable DNA primase to also catalyze primer extension after primer synthesis. May also play a role in DNA repair. In Archaeoglobus fulgidus (strain ATCC 49558 / DSM 4304 / JCM 9628 / NBRC 100126 / VC-16), this protein is DNA primase small subunit PriS.